The following is a 728-amino-acid chain: Microtubule-associated protein VP5 (728 aa).

This sequence belongs to the reoviridae microtubule-associated protein family.

Its subcellular location is the virion. The protein localises to the host cytoplasm. It is found in the host cytoskeleton. In terms of biological role, minor inner capsid component. Displays NTPase and RNA 5'-triphosphatase (RTPase) activities. May function as a cofactor of polymerase. Associates with microtubules and plays a role in the formation, structural organization and morphology of viral inclusions, where the assembly of cores and the replication of viral RNA occur. This Ctenopharyngodon idella (Grass carp) protein is Microtubule-associated protein VP5 (S5).